Consider the following 1794-residue polypeptide: Non-reducing polyketide synthase nscA (1794 aa).

An N-terminal acylcarrier protein transacylase domain (SAT) region spans residues 19 to 256; the sequence is DLKDLFRRLH…PLPVYDGLCH (238 aa). A Ketosynthase family 3 (KS3) domain is found at 389–822; that stretch reads ASKLAIVGMA…GGNTTVLLED (434 aa). Residues 427-448 form a disordered region; that stretch reads PDRFDLNTHYDPTGKTENATQT. Positions 428–440 are enriched in basic and acidic residues; the sequence is DRFDLNTHYDPTG. Residues C562, H697, and H740 each act as for beta-ketoacyl synthase activity in the active site. The malonyl-CoA:ACP transacylase (MAT) domain stretch occupies residues 928–1249; it reads FTGQGAYYSG…LVTLHLAGLT (322 aa). The product template (PT) domain stretch occupies residues 1314-1633; sequence TSLVHQITAE…RLLMDRFFSP (320 aa). Positions 1318 to 1454 are N-terminal hotdog fold; it reads HQITAETVEA…GVVRFEDPAA (137 aa). In terms of domain architecture, PKS/mFAS DH spans 1318 to 1628; that stretch reads HQITAETVEA…FRRVPRLLMD (311 aa). The Proton acceptor; for dehydratase activity role is filled by H1350. The C-terminal hotdog fold stretch occupies residues 1482 to 1628; that stretch reads ASKLSKPLAY…FRRVPRLLMD (147 aa). D1539 functions as the Proton donor; for dehydratase activity in the catalytic mechanism. Disordered regions lie at residues 1637 to 1665 and 1682 to 1718; these read SHAE…EAPA and ASKS…GDPV. Composition is skewed to polar residues over residues 1644-1655 and 1685-1701; these read QETAPSATSVKK and SEVS…QESP. Positions 1717–1794 constitute a Carrier domain; the sequence is PVDAGVVGQC…EMTAWLEEYC (78 aa). S1754 carries the O-(pantetheine 4'-phosphoryl)serine modification.

Requires pantetheine 4'-phosphate as cofactor.

Its pathway is secondary metabolite biosynthesis. Non-reducing polyketide synthase; part of the gene cluster that mediates the biosynthesis of neosartoricin, a prenylated anthracenone that exhibits T-cell antiproliferative activity, suggestive of a physiological role as an immunosuppressive agent. The non-reducing polyketide synthase nscA probably synthesizes and cyclizes the decaketide backbone. The hydrolase nscB then mediates the product release through hydrolysis followed by spontaneous decarboxylation. The prenyltransferase nscD catalyzes the addition of the dimethylallyl group to the aromatic C5. The FAD-dependent monooxygenase nscC is then responsible for the stereospecific hydroxylation at C2. There is no gene encoding O-acetyltransferase in the nsc gene cluster; thus, the last step of 2-O-acetylation leading to neosartoricin may be catalyzed by an unidentified O-acetyltransferase. The chain is Non-reducing polyketide synthase nscA from Neosartorya fischeri (strain ATCC 1020 / DSM 3700 / CBS 544.65 / FGSC A1164 / JCM 1740 / NRRL 181 / WB 181) (Aspergillus fischerianus).